A 358-amino-acid chain; its full sequence is MRSIVIAAGGTGGHISPGVALAEVLTDLKEKIGYENLYLYSLIRNQNNPDLEQAPCPVLWHNLPPLSSNIFLFPFRYTIQILKTFLLFKKLNVDVVIGMGGYSTVSSILYGILFKKKIYLCEQNTVPGNVSRLFFRFANKAAFSFPPKNSAIPCDYQVLGNPLRKKTLPKMSLKFSEKYDTKKKTQFNVLVMGGSQGARQINNIVIALMGHEEINIQFRFRVLTGSALYEEVSKKTKKDAELISYSDNMKEHYEWANFVIARAGSGVLSECAAFALPMILIPYPYAKDDHQMANARYLELNGAAIVIDQKDEDESHLFKVLDQIANNVNLLNDMSISSLQCSHVDASKDTVKYFFSLD.

Residues 11–13 (TGG), N124, R164, S195, and Q291 contribute to the UDP-N-acetyl-alpha-D-glucosamine site.

Belongs to the glycosyltransferase 28 family. MurG subfamily.

Its subcellular location is the cell inner membrane. It carries out the reaction di-trans,octa-cis-undecaprenyl diphospho-N-acetyl-alpha-D-muramoyl-L-alanyl-D-glutamyl-meso-2,6-diaminopimeloyl-D-alanyl-D-alanine + UDP-N-acetyl-alpha-D-glucosamine = di-trans,octa-cis-undecaprenyl diphospho-[N-acetyl-alpha-D-glucosaminyl-(1-&gt;4)]-N-acetyl-alpha-D-muramoyl-L-alanyl-D-glutamyl-meso-2,6-diaminopimeloyl-D-alanyl-D-alanine + UDP + H(+). The protein operates within cell wall biogenesis; peptidoglycan biosynthesis. In terms of biological role, cell wall formation. Catalyzes the transfer of a GlcNAc subunit on undecaprenyl-pyrophosphoryl-MurNAc-pentapeptide (lipid intermediate I) to form undecaprenyl-pyrophosphoryl-MurNAc-(pentapeptide)GlcNAc (lipid intermediate II). This is UDP-N-acetylglucosamine--N-acetylmuramyl-(pentapeptide) pyrophosphoryl-undecaprenol N-acetylglucosamine transferase from Leptospira borgpetersenii serovar Hardjo-bovis (strain JB197).